A 528-amino-acid polypeptide reads, in one-letter code: Gamma-taxilin (528 aa).

Positions methionine 1–arginine 10 are enriched in basic and acidic residues. Positions methionine 1 to glutamate 36 are disordered. Omega-N-methylarginine is present on residues arginine 12 and arginine 24. Serine 79, serine 86, serine 97, and serine 105 each carry phosphoserine. The tract at residues threonine 102 to asparagine 130 is disordered. Residues glutamate 104–proline 118 are compositionally biased toward basic and acidic residues. Residues glutamate 153–alanine 464 are a coiled coil. Tyrosine 283 carries the phosphotyrosine modification. The segment at histidine 486–aspartate 528 is disordered. Over residues glutamine 508–serine 520 the composition is skewed to polar residues. Serine 517 carries the phosphoserine modification.

This sequence belongs to the taxilin family. Binds to the C-terminal coiled coil region of syntaxin family members STX1A, STX3A and STX4A. Forms a heterodimer with ATF4 in osteoblasts. In terms of tissue distribution, ubiquitously expressed. Expressed at high level in heart and skeletal muscle. Expressed in brain, placenta, lung, liver, kidney and pancreas.

The protein localises to the nucleus membrane. Its subcellular location is the cytoplasm. The protein resides in the cytosol. Its function is as follows. May be involved in intracellular vesicle traffic. Inhibits ATF4-mediated transcription, possibly by dimerizing with ATF4 to form inactive dimers that cannot bind DNA. May be involved in regulating bone mass density through an ATF4-dependent pathway. May be involved in cell cycle progression. The chain is Gamma-taxilin (TXLNG) from Homo sapiens (Human).